Here is a 559-residue protein sequence, read N- to C-terminus: Actin-binding protein WASF1 (559 aa).

Disordered regions lie at residues 170–202, 304–383, and 412–490; these read EDKRKEKRKQKQKNLDRPHEPEKVPRAPHDRRR, IENR…GVLH, and VHPL…HPST. Over residues 182–202 the composition is skewed to basic and acidic residues; it reads KNLDRPHEPEKVPRAPHDRRR. Polar residues predominate over residues 304 to 313; sequence IENRPQSPAT. The span at 322-332 shows a compositional bias: pro residues; sequence PTPPPPPPPLP. Positions 333–346 are enriched in low complexity; the sequence is SALSTSSLRASMTS. Asymmetric dimethylarginine; alternate is present on Arg341. Arg341 carries the omega-N-methylarginine; alternate modification. 3 stretches are compositionally biased toward pro residues: residues 347–360, 423–437, and 460–477; these read TPPPPVPPPPPPPA, LPPPPPPPPLPPPGI, and STAPGPHVPLMPPSPPSQ. Phosphoserine is present on Ser489. One can recognise a WH2 domain in the interval 497–514; it reads ARSVLLEAIRKGIQLRKV.

This sequence belongs to the SCAR/WAVE family. In terms of assembly, component of the WAVE1 complex composed of ABI2, CYFIP1 or CYFIP2, BRK1, NCKAP1 and WASF1/WAVE1. Within the complex, a heterodimer containing NCKAP1 and CYFIP1 interacts with a heterotrimer formed by WAVE1, ABI2 and BRK1. CYFIP2 binds to activated RAC1 which causes the complex to dissociate, releasing activated WASF1. The complex can also be activated by NCK1. Binds actin and the Arp2/3 complex. Interacts with BAIAP2. Interacts with SHANK3; the interaction mediates the association of SHANK3 with the WAVE1 complex. Interacts with ABI1 (via N-terminus). Interacts with SORBS2; this interaction greatly enhances phosphorylation by ABL1 and dephosphorylation by PTPN12 and might mediate partial to focal adhesion sites.

It is found in the cytoplasm. The protein resides in the cytoskeleton. The protein localises to the synapse. Its subcellular location is the cell junction. It localises to the focal adhesion. Its function is as follows. Downstream effector molecule involved in the transmission of signals from tyrosine kinase receptors and small GTPases to the actin cytoskeleton. Promotes formation of actin filaments. Part of the WAVE complex that regulates lamellipodia formation. The WAVE complex regulates actin filament reorganization via its interaction with the Arp2/3 complex. As component of the WAVE1 complex, required for BDNF-NTRK2 endocytic trafficking and signaling from early endosomes. Also involved in the regulation of mitochondrial dynamics. This is Actin-binding protein WASF1 (WASF1) from Pongo abelii (Sumatran orangutan).